A 205-amino-acid chain; its full sequence is Probable nicotinate-nucleotide adenylyltransferase (205 aa).

It belongs to the NadD family.

It catalyses the reaction nicotinate beta-D-ribonucleotide + ATP + H(+) = deamido-NAD(+) + diphosphate. It functions in the pathway cofactor biosynthesis; NAD(+) biosynthesis; deamido-NAD(+) from nicotinate D-ribonucleotide: step 1/1. Catalyzes the reversible adenylation of nicotinate mononucleotide (NaMN) to nicotinic acid adenine dinucleotide (NaAD). The sequence is that of Probable nicotinate-nucleotide adenylyltransferase from Nocardioides sp. (strain ATCC BAA-499 / JS614).